The chain runs to 437 residues: Methylenetetrahydrofolate--tRNA-(uracil-5-)-methyltransferase TrmFO (437 aa).

10 to 15 provides a ligand contact to FAD; it reads GAGLAG.

Belongs to the MnmG family. TrmFO subfamily. FAD serves as cofactor.

Its subcellular location is the cytoplasm. It carries out the reaction uridine(54) in tRNA + (6R)-5,10-methylene-5,6,7,8-tetrahydrofolate + NADH + H(+) = 5-methyluridine(54) in tRNA + (6S)-5,6,7,8-tetrahydrofolate + NAD(+). The enzyme catalyses uridine(54) in tRNA + (6R)-5,10-methylene-5,6,7,8-tetrahydrofolate + NADPH + H(+) = 5-methyluridine(54) in tRNA + (6S)-5,6,7,8-tetrahydrofolate + NADP(+). In terms of biological role, catalyzes the folate-dependent formation of 5-methyl-uridine at position 54 (M-5-U54) in all tRNAs. The protein is Methylenetetrahydrofolate--tRNA-(uracil-5-)-methyltransferase TrmFO of Pelotomaculum thermopropionicum (strain DSM 13744 / JCM 10971 / SI).